A 156-amino-acid polypeptide reads, in one-letter code: Radiation-inducible immediate-early gene IEX-1 (156 aa).

Positions 1-62 (MCHSRSCHPT…SASRGHRKRS (62 aa)) are disordered. Residues 1–82 (MCHSRSCHPT…RQLPVEEPNP (82 aa)) are Cytoplasmic-facing. Thr-18 bears the Phosphothreonine; by MAPK1 mark. Ser-31 is modified (phosphoserine). The segment covering 44-55 (PAAAPAGRPSAS) has biased composition (low complexity). Residues 83–99 (AKRLLFLLLTIVFCQIL) form a helical; Signal-anchor for type II membrane protein membrane-spanning segment. Topologically, residues 100 to 156 (MAEEGVPAPLPPEDAPNAASLAPTPVSAVLEPFNLTSEPSDYALDLSTFLQQHPAAF) are extracellular. Thr-123 is modified (phosphothreonine; by MAPK1). The residue at position 126 (Ser-126) is a Phosphoserine; by MAPK1. A glycan (N-linked (GlcNAc...) asparagine) is linked at Asn-133.

The protein belongs to the IER3 family. As to quaternary structure, interacts with the PPP2R5C-PP2A holoenzyme and ERK kinases; regulates ERK dephosphorylation. Phosphorylated at Thr-18, Thr-123 and Ser-126 by MAPK1/ERK2 and probably MAPK3/ERK1. Upon phosphorylation by MAPK1/ERK2 and MAPK3/ERK1, acquires the ability to inhibit cell death induced by various stimuli. In terms of processing, glycosylated.

It localises to the membrane. Its function is as follows. May play a role in the ERK signaling pathway by inhibiting the dephosphorylation of ERK by phosphatase PP2A-PPP2R5C holoenzyme. Also acts as an ERK downstream effector mediating survival. As a member of the NUPR1/RELB/IER3 survival pathway, may provide pancreatic ductal adenocarcinoma with remarkable resistance to cell stress, such as starvation or gemcitabine treatment. The chain is Radiation-inducible immediate-early gene IEX-1 (IER3) from Homo sapiens (Human).